The following is a 604-amino-acid chain: NADPH oxidase activator (604 aa).

TPR repeat units lie at residues Ser-36 to Leu-69 and Ser-71 to His-103. Disordered regions lie at residues Phe-180 to Ser-298 and Asp-383 to Val-581. 2 stretches are compositionally biased toward low complexity: residues Ser-194–Ser-215 and Pro-225–Pro-243. Positions Lys-244–Ser-260 are enriched in pro residues. Residues Ser-261–Leu-284 are compositionally biased toward low complexity. In terms of domain architecture, PB1 spans Lys-309 to Ile-384. Composition is skewed to low complexity over residues Pro-396–Ser-424, Pro-435–Thr-453, and Phe-467–Ser-483. Over residues Leu-502–Gln-528 the composition is skewed to polar residues. The span at Ser-529–Ser-570 shows a compositional bias: low complexity. One can recognise a WW domain in the interval Pro-573–Pro-604.

Its function is as follows. May function as an activator of NOX1, a superoxide-producing NADPH oxidase. This is NADPH oxidase activator (ncfA) from Dictyostelium discoideum (Social amoeba).